The sequence spans 312 residues: Aspartate carbamoyltransferase catalytic subunit (312 aa).

Arginine 57 and threonine 58 together coordinate carbamoyl phosphate. Lysine 85 contacts L-aspartate. Carbamoyl phosphate is bound by residues arginine 107, histidine 135, and glutamine 138. The L-aspartate site is built by arginine 168 and arginine 222. Carbamoyl phosphate is bound by residues glycine 264 and proline 265.

It belongs to the aspartate/ornithine carbamoyltransferase superfamily. ATCase family. As to quaternary structure, heterododecamer (2C3:3R2) of six catalytic PyrB chains organized as two trimers (C3), and six regulatory PyrI chains organized as three dimers (R2).

It carries out the reaction carbamoyl phosphate + L-aspartate = N-carbamoyl-L-aspartate + phosphate + H(+). It participates in pyrimidine metabolism; UMP biosynthesis via de novo pathway; (S)-dihydroorotate from bicarbonate: step 2/3. Its function is as follows. Catalyzes the condensation of carbamoyl phosphate and aspartate to form carbamoyl aspartate and inorganic phosphate, the committed step in the de novo pyrimidine nucleotide biosynthesis pathway. This chain is Aspartate carbamoyltransferase catalytic subunit, found in Carboxydothermus hydrogenoformans (strain ATCC BAA-161 / DSM 6008 / Z-2901).